Here is a 66-residue protein sequence, read N- to C-terminus: Large ribosomal subunit protein bL35 (66 aa).

Over residues 24–43 (HKKAGKRHNLSKKSKARKRR) the composition is skewed to basic residues. The segment at 24-44 (HKKAGKRHNLSKKSKARKRRL) is disordered.

Belongs to the bacterial ribosomal protein bL35 family.

This is Large ribosomal subunit protein bL35 from Dictyoglomus thermophilum (strain ATCC 35947 / DSM 3960 / H-6-12).